The primary structure comprises 77 residues: Acyl carrier protein (77 aa).

Residues 2–77 form the Carrier domain; sequence SSIEERVNKI…SAVDYIKAHS (76 aa). Serine 37 is subject to O-(pantetheine 4'-phosphoryl)serine.

It belongs to the acyl carrier protein (ACP) family. Post-translationally, 4'-phosphopantetheine is transferred from CoA to a specific serine of apo-ACP by AcpS. This modification is essential for activity because fatty acids are bound in thioester linkage to the sulfhydryl of the prosthetic group.

The protein localises to the cytoplasm. It participates in lipid metabolism; fatty acid biosynthesis. Its function is as follows. Carrier of the growing fatty acid chain in fatty acid biosynthesis. The polypeptide is Acyl carrier protein (Alcanivorax borkumensis (strain ATCC 700651 / DSM 11573 / NCIMB 13689 / SK2)).